The sequence spans 639 residues: Uridine permease (639 aa).

The segment at 1–37 (MPVSDSGFDNSSKTMKDDTIPTEDYEEITKESEMGDA) is disordered. The Cytoplasmic segment spans residues 1-162 (MPVSDSGFDN…LQLGLNWWQT (162 aa)). At Thr54 the chain carries Phosphothreonine. Ser56 carries the post-translational modification Phosphoserine. A helical membrane pass occupies residues 163-180 (WICIWVGYTFVAFFLILG). Over 181 to 200 (SKVGNNYHISFPISSRVSFG) the chain is Extracellular. A helical transmembrane segment spans residues 201-225 (IYFSIWIVINRVVMACVWNSTLAYI). The Cytoplasmic segment spans residues 226 to 259 (GSQCVQLMLKAIFGTNLNTRIKDTIKNPNLTNFE). Residues 260–276 (FMCFMVFWVACLPFLWF) traverse the membrane as a helical segment. Topologically, residues 277–283 (PPDKLRH) are extracellular. The chain crosses the membrane as a helical span at residues 284 to 305 (IFALKSAITPFAAFGFLIWTLC). The Cytoplasmic segment spans residues 306–367 (KAKGHLALGS…KTYKSSVYSQ (62 aa)). A helical transmembrane segment spans residues 368-392 (LIALPVCYAIISLIGILSVSAAYTL). Residues 393–416 (YGVNYWSPLDILNRYLDNYTSGNR) are Extracellular-facing. Residues 417 to 435 (AGVFLISFIFAFDQLGANL) traverse the membrane as a helical segment. Residues 436–460 (SGNSIPAGTDLTALLPKFINIRRGS) lie on the Cytoplasmic side of the membrane. A helical membrane pass occupies residues 461-477 (YICALISLAICPWDLLS). Topologically, residues 478–483 (SSSKFT) are extracellular. Residues 484–507 (TALAAYAVFLSAIAGVISADYFIV) traverse the membrane as a helical segment. The Cytoplasmic portion of the chain corresponds to 508 to 537 (RKGYVNIFHCYTDKPGSYYMYNKYGTNWRA). Residues 538 to 562 (VVAYIFGIAPNFAGFLGSVGVSVPI) form a helical membrane-spanning segment. Topologically, residues 563 to 572 (GAMKVYYLNY) are extracellular. The helical transmembrane segment at 573–590 (FVGYLLAALSYCILVYFY) threads the bilayer. The Cytoplasmic portion of the chain corresponds to 591–639 (PIKGIPGDAKITDRKWLEEWVEVEEFGTEREAFEEYGGVSTGYEKIRYI). Lys635 participates in a covalent cross-link: Glycyl lysine isopeptide (Lys-Gly) (interchain with G-Cter in ubiquitin).

It belongs to the purine-cytosine permease (2.A.39) family.

Its subcellular location is the membrane. In terms of biological role, high-affinity transport of uridine. The polypeptide is Uridine permease (FUI1) (Saccharomyces cerevisiae (strain ATCC 204508 / S288c) (Baker's yeast)).